The primary structure comprises 464 residues: ATP synthase subunit beta 2 (464 aa).

Position 147 to 154 (G147 to T154) interacts with ATP.

This sequence belongs to the ATPase alpha/beta chains family. As to quaternary structure, F-type ATPases have 2 components, CF(1) - the catalytic core - and CF(0) - the membrane proton channel. CF(1) has five subunits: alpha(3), beta(3), gamma(1), delta(1), epsilon(1). CF(0) has four main subunits: a(1), b(1), b'(1) and c(9-12).

It is found in the cell inner membrane. It catalyses the reaction ATP + H2O + 4 H(+)(in) = ADP + phosphate + 5 H(+)(out). Its function is as follows. Produces ATP from ADP in the presence of a proton gradient across the membrane. The catalytic sites are hosted primarily by the beta subunits. This Cereibacter sphaeroides (strain ATCC 17023 / DSM 158 / JCM 6121 / CCUG 31486 / LMG 2827 / NBRC 12203 / NCIMB 8253 / ATH 2.4.1.) (Rhodobacter sphaeroides) protein is ATP synthase subunit beta 2.